A 575-amino-acid polypeptide reads, in one-letter code: 3-hydroxy-3-methylglutaryl-coenzyme A reductase 1 (575 aa).

The span at 1-13 (MDTTGRLHHRKHA) shows a compositional bias: basic residues. Residues 1 to 25 (MDTTGRLHHRKHATPVEDRSPTTPK) form a disordered region. 2 helical membrane-spanning segments follow: residues 29-49 (ALPLPLYLTNAVFFTLFFSVA) and 73-93 (EIVAIVSLIASFIYLLGFFGI). Residues 97–160 (QSFIARASHD…PLIAPLVSEE (64 aa)) form a linker region. Residue Asn132 is glycosylated (N-linked (GlcNAc...) asparagine). A catalytic region spans residues 161 to 575 (DEMIVNSVVD…SSKDMSKAAS (415 aa)). Catalysis depends on Glu254, which acts as the Charge relay system. Asn318 is a glycosylation site (N-linked (GlcNAc...) asparagine). Catalysis depends on charge relay system residues Lys386 and Asp462. Residues 531 to 551 (LLAAIVAGSVLAGELSLMSAI) form a helical membrane-spanning segment. The Proton donor role is filled by His560. Asn564 carries N-linked (GlcNAc...) asparagine glycosylation.

It belongs to the HMG-CoA reductase family.

It localises to the endoplasmic reticulum membrane. The protein localises to the mitochondrion membrane. The protein resides in the plastid membrane. The catalysed reaction is (R)-mevalonate + 2 NADP(+) + CoA = (3S)-3-hydroxy-3-methylglutaryl-CoA + 2 NADPH + 2 H(+). The protein operates within metabolic intermediate biosynthesis; (R)-mevalonate biosynthesis; (R)-mevalonate from acetyl-CoA: step 3/3. Its function is as follows. Catalyzes the synthesis of mevalonate. The specific precursor of all isoprenoid compounds present in plants. In Hevea brasiliensis (Para rubber tree), this protein is 3-hydroxy-3-methylglutaryl-coenzyme A reductase 1 (HMGR1).